The sequence spans 379 residues: 8-amino-7-oxononanoate synthase (379 aa).

Substrate is bound by residues Arg-27 and Arg-34. Residue 114–115 (GY) coordinates pyridoxal 5'-phosphate. Substrate is bound at residue His-139. Pyridoxal 5'-phosphate-binding positions include Ser-187, 212–215 (DDAH), and 232–235 (TLSK). Lys-235 bears the N6-(pyridoxal phosphate)lysine mark. Position 344 (Thr-344) interacts with substrate.

This sequence belongs to the class-II pyridoxal-phosphate-dependent aminotransferase family. BioF subfamily. In terms of assembly, homodimer. It depends on pyridoxal 5'-phosphate as a cofactor.

It catalyses the reaction 6-carboxyhexanoyl-[ACP] + L-alanine + H(+) = (8S)-8-amino-7-oxononanoate + holo-[ACP] + CO2. The protein operates within cofactor biosynthesis; biotin biosynthesis. Catalyzes the decarboxylative condensation of pimeloyl-[acyl-carrier protein] and L-alanine to produce 8-amino-7-oxononanoate (AON), [acyl-carrier protein], and carbon dioxide. The sequence is that of 8-amino-7-oxononanoate synthase from Methylobacterium nodulans (strain LMG 21967 / CNCM I-2342 / ORS 2060).